We begin with the raw amino-acid sequence, 467 residues long: Tripartite motif-containing protein 75 (467 aa).

The segment at 16 to 57 adopts an RING-type zinc-finger fold; that stretch reads CPICLDDLTDPVTVECGHNFCRSCIKDFWAGQQATSSCPVCR. The B box-type zinc finger occupies 90–131; sequence ESSTSCERHNQALTLFCEDDLQLLCDQCVEPESHGRHQVLSI. Zn(2+) is bound by residues C95, H98, C117, and H123. The stretch at 168 to 222 forms a coiled coil; that stretch reads VTLREQAEAQRSQLTSECEKLMRFLDQEERAAFSRLEDEEMRLEKRLLDNIAALE. The region spanning 276–466 is the B30.2/SPRY domain; sequence YSFPLQYSAL…LRLCSATDSE (191 aa).

Belongs to the TRIM/RBCC family.

The protein localises to the cytoplasm. The protein resides in the cytoskeleton. Its subcellular location is the spindle. In terms of biological role, may play a role in female meiosis. This Mus musculus (Mouse) protein is Tripartite motif-containing protein 75.